A 676-amino-acid chain; its full sequence is Periplasmic alpha-amylase (676 aa).

A signal peptide spans 1 to 17; sequence MKLAACFLTLLPGFAVA. Disulfide bonds link Cys-57/Cys-75 and Cys-121/Cys-537. Asn-314 provides a ligand contact to Ca(2+). Asp-460 (nucleophile) is an active-site residue. Position 464 (His-464) interacts with Ca(2+). The Proton donor role is filled by Glu-503.

It belongs to the glycosyl hydrolase 13 family. As to quaternary structure, monomer. It depends on Ca(2+) as a cofactor.

The protein localises to the periplasm. It catalyses the reaction Endohydrolysis of (1-&gt;4)-alpha-D-glucosidic linkages in polysaccharides containing three or more (1-&gt;4)-alpha-linked D-glucose units.. Since only maltooligosaccharides up to a chain length of 6 glucose units are actively transported through the cytoplasmic membrane via the membrane-bound complex of three proteins, MalF, MalG, and MalK, longer maltooligosaccharides must first be degraded by the periplasmic alpha-amylase, the MalS protein. This chain is Periplasmic alpha-amylase (malS), found in Escherichia coli (strain K12).